A 107-amino-acid chain; its full sequence is High mobility group protein HMG-I/HMG-Y (107 aa).

The segment covering 1-13 (MSESGSKSSQPLA) has biased composition (polar residues). The interval 1–107 (MSESGSKSSQ…ISQESSEEEQ (107 aa)) is disordered. S2 carries the N-acetylserine modification. At K7 the chain carries N6-acetyllysine. S8 is modified (ADP-ribosylserine). Residue S9 is modified to ADP-ribosylserine; alternate. S9 carries the phosphoserine; alternate modification. At K15 the chain carries N6-acetyllysine; alternate. A Glycyl lysine isopeptide (Lys-Gly) (interchain with G-Cter in SUMO2); alternate cross-link involves residue K15. Basic and acidic residues predominate over residues 15 to 24 (KQEKDGTEKR). A DNA-binding region (a.T hook 1) is located at residues 21–31 (TEKRGRGRPRK). Position 26 is an asymmetric dimethylarginine; alternate (R26). R26 is modified (omega-N-methylarginine; alternate). At R26 the chain carries Symmetric dimethylarginine; alternate. S36 carries the post-translational modification Phosphoserine; by HIPK2 and CDC2. Position 39 is a phosphothreonine (T39). Phosphoserine is present on residues S44 and S49. Residue T53 is modified to Phosphothreonine; by HIPK2 and CDC2. 2 consecutive DNA-binding regions (a.T hook) follow at residues 53 to 63 (TPKRPRGRPKG) and 78 to 89 (APGRKPRGRPKK). The tract at residues 53–77 (TPKRPRGRPKGSKNKGAAKTRKVTT) is interaction with HIPK2. The span at 55 to 74 (KRPRGRPKGSKNKGAAKTRK) shows a compositional bias: basic residues. Asymmetric dimethylarginine; by PRMT6; alternate is present on residues R58 and R60. An omega-N-methylarginine; by PRMT6; alternate mark is found at R58 and R60. The segment covering 93–107 (EEEEGISQESSEEEQ) has biased composition (acidic residues). Phosphoserine occurs at positions 99, 102, and 103.

Belongs to the HMGA family. In terms of assembly, interacts with HIPK2. Post-translationally, isoforms HMG-I and HMG-Y can be phosphorylated by HIPK2. Phosphorylation may modulate DNA-binding affinity. In terms of processing, methylation at Arg-58 is mutually exclusive with methylation at Arg-60.

Its subcellular location is the nucleus. It localises to the chromosome. Its function is as follows. HMG-I/Y bind preferentially to the minor groove of A+T rich regions in double-stranded DNA. It is suggested that these proteins could function in nucleosome phasing and in the 3'-end processing of mRNA transcripts. They are also involved in the transcription regulation of genes containing, or in close proximity to A+T-rich regions. The protein is High mobility group protein HMG-I/HMG-Y (Hmga1) of Mus musculus (Mouse).